Here is a 58-residue protein sequence, read N- to C-terminus: UPF0391 membrane protein Shew185_1413 (58 aa).

The next 2 membrane-spanning stretches (helical) occupy residues 6-26 (LVFL…IAGA) and 28-48 (AGIA…SLLI).

Belongs to the UPF0391 family.

It localises to the cell membrane. This chain is UPF0391 membrane protein Shew185_1413, found in Shewanella baltica (strain OS185).